The chain runs to 550 residues: Solute carrier family 22 member 11 (550 aa).

Residues 1–10 (MAFSKLLEQA) lie on the Cytoplasmic side of the membrane. Residues 11–31 (GGVGLFQTLQVLTFILPCLMI) traverse the membrane as a helical segment. The Extracellular segment spans residues 32-142 (PSQMLLENFS…DLVCSSQGLK (111 aa)). Asn39, Asn56, and Asn99 each carry an N-linked (GlcNAc...) asparagine glycan. The helical transmembrane segment at 143 to 163 (PLSQSIFMSGILVGSFIWGLL) threads the bilayer. At 164-174 (SYRFGRKPMLS) the chain is on the cytoplasmic side. Residues 175 to 195 (WCCLQLAVAGTSTIFAPTFVI) traverse the membrane as a helical segment. Topologically, residues 196 to 200 (YCGLR) are extracellular. A helical transmembrane segment spans residues 201–221 (FVAAFGMAGIFLSSLTLMVEW). Over 222 to 231 (TTTSRRAVTM) the chain is Cytoplasmic. Residues 232–252 (TVVGCAFSAGQAALGGLAFAL) traverse the membrane as a helical segment. Residues 253–256 (RDWR) lie on the Extracellular side of the membrane. The helical transmembrane segment at 257-277 (TLQLAASVPFFAISLISWWLP) threads the bilayer. The Cytoplasmic portion of the chain corresponds to 278 to 346 (ESARWLIIKG…FCVPVLRWRS (69 aa)). Residues 347–367 (CAMLVVNFSLLISYYGLVFDL) form a helical membrane-spanning segment. Topologically, residues 368–378 (QSLGRDIFLLQ) are extracellular. The chain crosses the membrane as a helical span at residues 379-399 (ALFGAVDFLGRATTALLLSFL). Residues 400 to 402 (GRR) are Cytoplasmic-facing. The chain crosses the membrane as a helical span at residues 403 to 423 (TIQAGSQAMAGLAILANMLVP). Topologically, residues 424-430 (QDLQTLR) are extracellular. Residues 431 to 451 (VVFAVLGKGCFGISLTCLTIY) form a helical membrane-spanning segment. Residues 452 to 463 (KAELFPTPVRMT) lie on the Cytoplasmic side of the membrane. A helical membrane pass occupies residues 464 to 484 (ADGILHTVGRLGAMMGPLILM). The Extracellular segment spans residues 485-490 (SRQALP). Residues 491–511 (LLPPLLYGVISIASSLVVLFF) form a helical membrane-spanning segment. Residues 512-550 (LPETQGLPLPDTIQDLESQKSTAAQGNRQEAVTVESTSL) are Cytoplasmic-facing. Residues 531–550 (KSTAAQGNRQEAVTVESTSL) form a disordered region.

The protein belongs to the major facilitator (TC 2.A.1) superfamily. Organic cation transporter (TC 2.A.1.19) family. In terms of processing, N-glycosylated. Contains several complex-type N-glycans. As to expression, expressed in placental trophoblasts, syncytiotrophoblast and cytotrophoblast. Also located in the proximal tubules in kidneys.

The protein localises to the cell membrane. It is found in the apical cell membrane. It localises to the basal cell membrane. It catalyses the reaction estrone 3-sulfate(out) + glutarate(in) = estrone 3-sulfate(in) + glutarate(out). The enzyme catalyses dehydroepiandrosterone 3-sulfate(out) = dehydroepiandrosterone 3-sulfate(in). It carries out the reaction prostaglandin F2alpha(out) = prostaglandin F2alpha(in). The catalysed reaction is prostaglandin E2(out) = prostaglandin E2(in). Functionally, antiporter that mediates the transport of conjugated steroids and other specific organic anions at the basal membrane of syncytiotrophoblast and at the apical membrane of proximal tubule epithelial cells, in exchange for anionic compounds. May be responsible for placental absorption of fetal-derived steroid sulfates such as estrone sulfate (E1S) and the steroid hormone precursor dehydroepiandrosterone sulfate (DHEA-S), as well as clearing waste products and xenobiotics from the fetus. Maybe also be involved in placental urate homeostasis. Facilitates the renal reabsorption of organic anions such as urate and derived steroid sulfates. Organic anion glutarate acts as conteranion for E1S renal uptake. Possible transport mode may also include DHEA-S/E1S exchange. Also interacts with inorganic anions such as chloride and hydroxyl ions, therefore possible transport modes may include E1S/Cl(-), E1S/OH(-), urate/Cl(-) and urate/OH(-). Also mediates the transport of prostaglandin E2 (PGE2) and prostaglandin F2-alpha (PGF2-alpha) and may be involved in their renal excretion. Also able to uptake anionic drugs, diuretics, bile salts and ochratoxin A. Mediates the unidirectional efflux of glutamate and aspartate. Glutamate efflux down its transmembrane gradient may drive SLC22A11/OAT4-mediated placental uptake of E1S. This chain is Solute carrier family 22 member 11, found in Homo sapiens (Human).